The chain runs to 476 residues: Angiotensinogen (476 aa).

The N-terminal stretch at 1 to 24 (MAPAGLSLGAAILCLLAWAGLAAG) is a signal peptide. The cysteines at positions 42 and 161 are disulfide-linked. Residues Asn295, Asn319, Asn362, and Asn401 are each glycosylated (N-linked (GlcNAc...) asparagine).

It belongs to the serpin family. In terms of processing, in response to low blood pressure, the enzyme renin/REN cleaves angiotensinogen to produce angiotensin-1. Angiotensin-1 is a substrate of ACE (angiotensin converting enzyme) that removes a dipeptide to yield the physiologically active peptide angiotensin-2. Angiotensin-1 and angiotensin-2 can be further processed to generate angiotensin-3, angiotensin-4. Angiotensin 1-9 is cleaved from angiotensin-1 by ACE2 and can be further processed by ACE to produce angiotensin 1-7, angiotensin 1-5 and angiotensin 1-4. Angiotensin 1-7 has also been proposed to be cleaved from angiotensin-2 by ACE2 or from angiotensin-1 by MME (neprilysin). Post-translationally, the disulfide bond is labile. Angiotensinogen is present in the circulation in a near 40:60 ratio with the oxidized disulfide-bonded form, which preferentially interacts with receptor-bound renin.

Its subcellular location is the secreted. In terms of biological role, essential component of the renin-angiotensin system (RAS), a potent regulator of blood pressure, body fluid and electrolyte homeostasis. Acts directly on vascular smooth muscle as a potent vasoconstrictor, affects cardiac contractility and heart rate through its action on the sympathetic nervous system, and alters renal sodium and water absorption through its ability to stimulate the zona glomerulosa cells of the adrenal cortex to synthesize and secrete aldosterone. Acts by binding to angiotensin receptors AGTR1 and AGTR2. Also binds the DEAR/FBXW7-AS1 receptor. Functionally, stimulates aldosterone release. Its function is as follows. Is a ligand for the G-protein coupled receptor MAS1. Has vasodilator and antidiuretic effects. Has an antithrombotic effect that involves MAS1-mediated release of nitric oxide from platelets. The chain is Angiotensinogen (AGT) from Bos taurus (Bovine).